The following is a 251-amino-acid chain: Tyrosine phosphatase-like protein J3 (251 aa).

Residues 26–251 (IADEYYTIVP…PVLQNSKRRE (226 aa)) enclose the Tyrosine-protein phosphatase domain.

It belongs to the protein-tyrosine phosphatase family.

In Microplitis demolitor (Parasitoid wasp), this protein is Tyrosine phosphatase-like protein J3 (J4).